The following is a 433-amino-acid chain: Chitinase-like protein EN03 (433 aa).

An N-terminal signal peptide occupies residues 1–16 (MKLFIALVGLLALAKA). The GH18 domain maps to 23-433 (SKVLCYYDSR…PILRAAKYRL (411 aa)). Cysteines 27 and 54 form a disulfide. A glycan (N-linked (GlcNAc...) asparagine) is linked at N220. A disulfide bridge connects residues C337 and C418.

The protein belongs to the glycosyl hydrolase 18 family. IDGF subfamily.

The protein resides in the secreted. The chain is Chitinase-like protein EN03 from Bombyx mori (Silk moth).